A 99-amino-acid chain; its full sequence is Cell division protein FtsB (99 aa).

Residues 1–3 (MKF) lie on the Cytoplasmic side of the membrane. A helical transmembrane segment spans residues 4 to 21 (FVITLIVLLGLLQYRLWS). Topologically, residues 22–99 (GDNSLPEYFV…GDRAVSSPSQ (78 aa)) are periplasmic. Positions 31–73 (VLQKQIAAQQDGNAKLNERNQVLKEEIIDLKSGTEAIEERARN) form a coiled coil.

This sequence belongs to the FtsB family. In terms of assembly, part of a complex composed of FtsB, FtsL and FtsQ.

The protein resides in the cell inner membrane. Its function is as follows. Essential cell division protein. May link together the upstream cell division proteins, which are predominantly cytoplasmic, with the downstream cell division proteins, which are predominantly periplasmic. In Shewanella oneidensis (strain ATCC 700550 / JCM 31522 / CIP 106686 / LMG 19005 / NCIMB 14063 / MR-1), this protein is Cell division protein FtsB.